A 351-amino-acid chain; its full sequence is Phosphate acyltransferase (351 aa).

It belongs to the PlsX family. As to quaternary structure, homodimer. Probably interacts with PlsY.

The protein localises to the cytoplasm. It catalyses the reaction a fatty acyl-[ACP] + phosphate = an acyl phosphate + holo-[ACP]. The protein operates within lipid metabolism; phospholipid metabolism. Its function is as follows. Catalyzes the reversible formation of acyl-phosphate (acyl-PO(4)) from acyl-[acyl-carrier-protein] (acyl-ACP). This enzyme utilizes acyl-ACP as fatty acyl donor, but not acyl-CoA. This is Phosphate acyltransferase from Neisseria meningitidis serogroup A / serotype 4A (strain DSM 15465 / Z2491).